A 315-amino-acid chain; its full sequence is tRNA dimethylallyltransferase (315 aa).

13–20 (GPTASGKT) is an ATP binding site. 15-20 (TASGKT) serves as a coordination point for substrate. 3 interaction with substrate tRNA regions span residues 38–41 (DSAL), 162–166 (QRIQR), and 245–250 (RCVGYR).

The protein belongs to the IPP transferase family. As to quaternary structure, monomer. Mg(2+) is required as a cofactor.

The catalysed reaction is adenosine(37) in tRNA + dimethylallyl diphosphate = N(6)-dimethylallyladenosine(37) in tRNA + diphosphate. Catalyzes the transfer of a dimethylallyl group onto the adenine at position 37 in tRNAs that read codons beginning with uridine, leading to the formation of N6-(dimethylallyl)adenosine (i(6)A). This is tRNA dimethylallyltransferase from Methylobacillus flagellatus (strain ATCC 51484 / DSM 6875 / VKM B-1610 / KT).